A 388-amino-acid polypeptide reads, in one-letter code: Cdc42 effector protein 1 (388 aa).

Residues 1–28 (MPGPQGGTGAPSMSLGKLSPVGWVPSSH) are disordered. 2 positions are modified to phosphoserine: serine 19 and serine 27. The residue at position 34 (threonine 34) is a Phosphothreonine. In terms of domain architecture, CRIB spans 38–52 (ISPPLGDFRHTMHVG). Residue serine 39 is modified to Phosphoserine. Arginine 53 is modified (omega-N-methylarginine). 6 positions are modified to phosphoserine: serine 65, serine 77, serine 101, serine 113, serine 121, and serine 139. Positions 165–206 (RLPRVEKHSSRDRDHDRDPDHSQDREQSSSPSEPNPNPELRR) are disordered. The span at 167–191 (PRVEKHSSRDRDHDRDPDHSQDREQ) shows a compositional bias: basic and acidic residues. Phosphoserine is present on residues serine 193, serine 207, serine 209, and serine 212. A run of 2 repeats spans residues 237–243 (PAANPPA) and 250–256 (PTAKPPA). The disordered stretch occupies residues 237–257 (PAANPPAPAANPAPTAKPPAD). The 2 X 7 AA tandem repeats of [PT]-[AT]-A-[ENT]-[PT]-[PTS]-[AG] stretch occupies residues 237 to 270 (PAANPPAPAANPAPTAKPPADAVTTLDTVTSLPA). The span at 239 to 253 (ANPPAPAANPAPTAK) shows a compositional bias: pro residues. A phosphoserine mark is found at serine 298, serine 318, serine 347, and serine 350.

Belongs to the BORG/CEP family. As to quaternary structure, interacts with RHOQ and CDC42, in a GTP-dependent manner.

The protein resides in the endomembrane system. The protein localises to the cytoplasm. It is found in the cytoskeleton. Functionally, probably involved in the organization of the actin cytoskeleton. Induced membrane extensions in fibroblasts. This is Cdc42 effector protein 1 from Rattus norvegicus (Rat).